Here is a 59-residue protein sequence, read N- to C-terminus: Large ribosomal subunit protein uL30 (59 aa).

The protein belongs to the universal ribosomal protein uL30 family. In terms of assembly, part of the 50S ribosomal subunit.

The chain is Large ribosomal subunit protein uL30 from Proteus mirabilis (strain HI4320).